The following is a 322-amino-acid chain: 2-methylene-furan-3-one reductase (322 aa).

NADP(+) is bound by residues lysine 59, 174-175 (GV), 197-200 (STKK), tyrosine 215, isoleucine 253, 264-266 (FVL), 311-312 (RA), and 311-322 (RATGKVVVYPIP). Lysine 59 contacts substrate.

This sequence belongs to the zinc-containing alcohol dehydrogenase family. Quinone oxidoreductase subfamily. As to quaternary structure, monomer. Post-translationally, the N-terminus is blocked.

It catalyses the reaction 4-hydroxy-2,5-dimethyl-furan-3(2H)-one + NADP(+) = 4-hydroxy-5-methyl-2-methylenefuran-3(2H)-one + NADPH + H(+). Functionally, enone oxidoreductase involved in the biosynthesis of 4-hydroxy-2,5-dimethyl-3(2H)-furanone (HDMF or furaneol), the key flavor compound in strawberries. Can use both NADH and NADPH as the electron donor. The polypeptide is 2-methylene-furan-3-one reductase (EO) (Fragaria ananassa (Strawberry)).